A 570-amino-acid chain; its full sequence is Protein HEATR9 (570 aa).

The polypeptide is Protein HEATR9 (HEATR9) (Macaca fascicularis (Crab-eating macaque)).